A 170-amino-acid polypeptide reads, in one-letter code: Protein FAM209 (170 aa).

An N-terminal signal peptide occupies residues 1-20; sequence MRTLLRWCLFLSLCVSCACA. A helical transmembrane segment spans residues 56–76; that stretch reads WLGNKWLWLFVAIMIYVMLKF. The interval 83-107 is disordered; sequence KEQHPPGLRGCQLRSPPKKAQNISP.

Interacts with DPY19L2. Interacts with CYLC1; the interaction may be relevant for proper acrosome attachment to the nuclear envelope. As to expression, predominately expressed in testis.

It localises to the nucleus inner membrane. Its function is as follows. Required for sperm acrosome biogenesis. This chain is Protein FAM209, found in Mus musculus (Mouse).